Reading from the N-terminus, the 451-residue chain is Probable beta-1,4-xylosyltransferase GT43E (451 aa).

Topologically, residues 1 to 88 are cytoplasmic; sequence MVSSRRNTGG…SKSRGLSCKR (88 aa). The chain crosses the membrane as a helical; Signal-anchor for type II membrane protein span at residues 89–109; the sequence is LAFHLFVCFMVGIFIGFMPFF. At 110 to 451 the chain is on the lumenal side; sequence SVDVSQKIVS…KNLDAVIPVT (342 aa). Asn-260 and Asn-366 each carry an N-linked (GlcNAc...) asparagine glycan.

It belongs to the glycosyltransferase 43 family.

The protein localises to the golgi apparatus membrane. In terms of biological role, probable beta-1,4-xylosyltransferase involved in xylan biosynthesis in cell walls. The protein is Probable beta-1,4-xylosyltransferase GT43E of Oryza sativa subsp. japonica (Rice).